The sequence spans 471 residues: Extracellular endo-alpha-(1-&gt;5)-L-arabinanase (471 aa).

Positions 1–19 are cleaved as a signal peptide; sequence MRFLFLMITLTALTGYILA. The active-site Proton acceptor is the D32. Substrate-binding positions include D32, G117, 167-170, 187-189, and 219-223; these read NALD, SWF, and HSSME. The active-site Proton donor is E223. H314 contacts Ca(2+).

Belongs to the glycosyl hydrolase 43 family. Monomer. Ca(2+) serves as cofactor.

The protein localises to the secreted. It carries out the reaction Endohydrolysis of (1-&gt;5)-alpha-arabinofuranosidic linkages in (1-&gt;5)-arabinans.. It participates in glycan metabolism; L-arabinan degradation. In terms of biological role, involved in the degradation of arabinan and is a key enzyme in the complete degradation of the plant cell wall. Catalyzes the internal cleavage of alpha-(1-&gt;5)-L-arabinofuranosyl residues in different arabinan-containing polysaccharides, and releases arabinotriose and arabinobiose as end products. It acts on branched arabinan (from sugar beet), but more slowly when compared to linear or debranched arabinan. This is Extracellular endo-alpha-(1-&gt;5)-L-arabinanase from Thermotoga petrophila (strain ATCC BAA-488 / DSM 13995 / JCM 10881 / RKU-1).